The primary structure comprises 173 residues: RNA polymerase sigma factor TcsR (173 aa).

The segment at 122–169 (IKDLTQNEKNIIRKIYLDRLRESEISRELNISRQAVNKTHLRALEKLK) is sigma-70 factor domain-4. The H-T-H motif DNA-binding region spans 143 to 162 (ESEISRELNISRQAVNKTHL).

Belongs to the sigma-70 factor family.

In terms of biological role, sigma factors are initiation factors that promote the attachment of RNA polymerase to specific initiation sites and are then released. Transcriptional regulator specifically required to activate expression of the toxin gene locus, composed of tcsL, tcsH and tcdE/utxA. This is RNA polymerase sigma factor TcsR from Paraclostridium sordellii (Clostridium sordellii).